The primary structure comprises 771 residues: Metal transporter CNNM4 (771 aa).

The Extracellular segment spans residues 1–175; it reads MAPGGGGGRR…LLFMVEEHGR (175 aa). Asparagine 119 carries N-linked (GlcNAc...) asparagine glycosylation. The 181-residue stretch at 175–355 folds into the CNNM transmembrane domain; the sequence is RFLPLWLHIL…EPYNDLVKEE (181 aa). The chain crosses the membrane as a helical span at residues 176 to 196; the sequence is FLPLWLHILLVMVLLVLSGIF. Over 197-237 the chain is Cytoplasmic; that stretch reads SGLNLGLMALDPMELRIVQNCGTEKERKYARKIEPIRRKGN. An intramembrane region (helical) is located at residues 238 to 258; sequence YLLCSLLLGNVLVNTSLTILL. Over 259–261 the chain is Cytoplasmic; that stretch reads DNL. The chain crosses the membrane as a helical span at residues 262-282; that stretch reads IGSGIMAVASSTIGIVIFGEI. Topologically, residues 283–290 are extracellular; the sequence is LPQALCSR. Residues 291–313 traverse the membrane as a helical segment; that stretch reads HGLAVGANTIVLTKVFMLLTFPL. Over 314–771 the chain is Cytoplasmic; that stretch reads SFPISKLLDF…LHRASEEETI (458 aa). 2 consecutive CBS domains span residues 374–435 and 442–508; these read MTQL…CTPL and YNHP…ILDE. Phosphoserine is present on residues serine 657, serine 661, and serine 766.

Belongs to the ACDP family. In terms of assembly, interacts with COX11. In terms of tissue distribution, cornea, retina, teeth (at protein level). In the retina it is predominantly localized to the outer plexiform layer, inner plexiform layer and ganglion cell layer. In the tooth strongest expression is observed in the cell body of the ameloblasts. Expressed at high levels in the gastrointestinal tract and testis.

It localises to the cell membrane. Its function is as follows. Probable metal transporter. The interaction with the metal ion chaperone COX11 suggests that it may play a role in sensory neuron functions. May play a role in biomineralization and retinal function. The chain is Metal transporter CNNM4 (Cnnm4) from Mus musculus (Mouse).